The sequence spans 154 residues: Small ribosomal subunit protein uS19B (154 aa).

At serine 63 the chain carries Phosphoserine.

This sequence belongs to the universal ribosomal protein uS19 family. In terms of assembly, component of the small ribosomal subunit (SSU). Mature yeast ribosomes consist of a small (40S) and a large (60S) subunit. The 40S small subunit contains 1 molecule of ribosomal RNA (18S rRNA) and at least 33 different proteins. The large 60S subunit contains 3 rRNA molecules (25S, 5.8S and 5S rRNA) and at least 46 different proteins.

Its subcellular location is the cytoplasm. It is found in the nucleus. It localises to the nucleolus. Functionally, component of the ribosome, a large ribonucleoprotein complex responsible for the synthesis of proteins in the cell. The small ribosomal subunit (SSU) binds messenger RNAs (mRNAs) and translates the encoded message by selecting cognate aminoacyl-transfer RNA (tRNA) molecules. The large subunit (LSU) contains the ribosomal catalytic site termed the peptidyl transferase center (PTC), which catalyzes the formation of peptide bonds, thereby polymerizing the amino acids delivered by tRNAs into a polypeptide chain. The nascent polypeptides leave the ribosome through a tunnel in the LSU and interact with protein factors that function in enzymatic processing, targeting, and the membrane insertion of nascent chains at the exit of the ribosomal tunnel. uS19 is involved in the nuclear export of the small ribosomal subunit precursor. Has a role in the late stage of the assembly of pre-40S particles within the nucleus and controls their export to the cytoplasm. In Schizosaccharomyces pombe (strain 972 / ATCC 24843) (Fission yeast), this protein is Small ribosomal subunit protein uS19B (rps1502).